A 1415-amino-acid polypeptide reads, in one-letter code: Zygote defective protein 9 (1415 aa).

2 TOG regions span residues 1–250 (MSNW…AKNA) and 251–530 (PPVA…AGPA). The stretch at 21–48 (DELRESKKWQERKEALEALLKVLTDNER) forms a coiled coil. HEAT repeat units lie at residues 30–68 (QERKEALEALLKVLTDNERLSTKASYAELIGHLQMVLAK), 95–132 (SFAGPLLPVIFEKMKEKKPMLREPLVDCSNEVGRTMQS), 135–172 (TGQEDILAALAKPNPQIKQQTALFVARQLDLVVPAKQP), and 179–217 (VVPVFGKLTGDADQDVREASLQGLGAVQRIIGDKNVKNL). Residues 243–278 (AEEQAKNAPPVAPTSSTPSASAASGDPSGGTATAVV) are disordered. Over residues 255–276 (PTSSTPSASAASGDPSGGTATA) the composition is skewed to low complexity. 4 HEAT repeats span residues 339 to 377 (ANYGALVERLQKVLEKDANINVAALAANCITGIANGLRT), 381 to 418 (PFAVSVTPIIFEKFKEKKPTLRDPLVACIDAVVATTNL), 420 to 457 (AVGEIVLAALGKPNPSIKTQTDLFLQRCFMKLNSQTMP), and 464 to 502 (LIPSLIKHSGDSDSEVREASYAAMGAMMRAIGEKPSLQL). Residues 544–603 (APPAAAPPKKTAPPKKQPEDEEVVEEEDEPLKPPPGDKKKKVPVKENEENEPPVVAPKAE) are disordered. The span at 562–572 (EDEEVVEEEDE) shows a compositional bias: acidic residues. The interval 602-867 (AELLLSDNED…VEERIKRTGV (266 aa)) is TOG 3. HEAT repeat units lie at residues 706–743 (IKVLELCKVIVELIRDTETPMSQEEVSAFVPYLLLKTG), 764–801 (VGPLKMTPMLLDALKSKNARQRSECLLVIEYYITNAGI), and 804–841 (LKSLSVEKTVAPFVGDKDVNVRNAAINVLVACFKFEGD). A disordered region spans residues 867-914 (VKPGSGVVTSPPTGGPKILVPQQQGSVVRRPASRSRTREPEPEEVQSD).

It belongs to the TOG/XMAP215 family. In terms of assembly, interacts with tac-1 to form a heterodimer.

The protein localises to the cytoplasm. It localises to the cytoskeleton. Its subcellular location is the spindle pole. It is found in the microtubule organizing center. The protein resides in the centrosome. Its function is as follows. Plays a major role in organizing microtubules and spindle poles during mitosis and meiosis in one-cell stage embryos. Required for default nucleus positioning in oocytes. This Caenorhabditis elegans protein is Zygote defective protein 9.